We begin with the raw amino-acid sequence, 200 residues long: LexA repressor (200 aa).

The H-T-H motif DNA-binding region spans 27–47 (VREICNAVELRSTSTVHGHLK). Residues serine 124 and lysine 161 each act as for autocatalytic cleavage activity in the active site.

It belongs to the peptidase S24 family. Homodimer.

It carries out the reaction Hydrolysis of Ala-|-Gly bond in repressor LexA.. Its function is as follows. Represses a number of genes involved in the response to DNA damage (SOS response), including recA and lexA. In the presence of single-stranded DNA, RecA interacts with LexA causing an autocatalytic cleavage which disrupts the DNA-binding part of LexA, leading to derepression of the SOS regulon and eventually DNA repair. This Clostridium tetani (strain Massachusetts / E88) protein is LexA repressor.